We begin with the raw amino-acid sequence, 118 residues long: Small ribosomal subunit protein uS13 (118 aa).

The segment at 95-118 is disordered; that stretch reads LPLRGQRTRTNARTRKGPRKAIKK.

It belongs to the universal ribosomal protein uS13 family. In terms of assembly, part of the 30S ribosomal subunit. Forms a loose heterodimer with protein S19. Forms two bridges to the 50S subunit in the 70S ribosome.

Functionally, located at the top of the head of the 30S subunit, it contacts several helices of the 16S rRNA. In the 70S ribosome it contacts the 23S rRNA (bridge B1a) and protein L5 of the 50S subunit (bridge B1b), connecting the 2 subunits; these bridges are implicated in subunit movement. Contacts the tRNAs in the A and P-sites. The polypeptide is Small ribosomal subunit protein uS13 (Xylella fastidiosa (strain 9a5c)).